Reading from the N-terminus, the 193-residue chain is Outer-membrane lipoprotein LolB (193 aa).

The signal sequence occupies residues 1-21; the sequence is MRPARRFLAALACVAGALLSA. Cysteine 22 carries the N-palmitoyl cysteine lipid modification. Residue cysteine 22 is the site of S-diacylglycerol cysteine attachment.

It belongs to the LolB family. Monomer.

The protein resides in the cell outer membrane. Its function is as follows. Plays a critical role in the incorporation of lipoproteins in the outer membrane after they are released by the LolA protein. This chain is Outer-membrane lipoprotein LolB, found in Azoarcus sp. (strain BH72).